A 233-amino-acid polypeptide reads, in one-letter code: Small ribosomal subunit protein uS2 (233 aa).

The protein belongs to the universal ribosomal protein uS2 family.

The sequence is that of Small ribosomal subunit protein uS2 from Bacillus mycoides (strain KBAB4) (Bacillus weihenstephanensis).